Here is a 215-residue protein sequence, read N- to C-terminus: Translation initiation factor IF-3 (215 aa).

Residues 159–215 (SAEVQQPPKREGRNMIMFLGPRKTPLQKDKPEQATKAERTLPIAKPPGKTAAPAAAN) are disordered. Over residues 184-197 (LQKDKPEQATKAER) the composition is skewed to basic and acidic residues. The segment covering 200–215 (PIAKPPGKTAAPAAAN) has biased composition (low complexity).

This sequence belongs to the IF-3 family. In terms of assembly, monomer.

The protein localises to the cytoplasm. Functionally, IF-3 binds to the 30S ribosomal subunit and shifts the equilibrium between 70S ribosomes and their 50S and 30S subunits in favor of the free subunits, thus enhancing the availability of 30S subunits on which protein synthesis initiation begins. This is Translation initiation factor IF-3 from Synechococcus sp. (strain RCC307).